The following is a 200-amino-acid chain: Putative AgrB-like protein (200 aa).

The next 5 membrane-spanning stretches (helical) occupy residues 49–69, 88–108, 114–134, 148–168, and 171–191; these read LIIT…LVFM, LLCT…IQFT, LFRF…SPAV, ALKH…FLVS, and LGTI…PLKG.

It belongs to the AgrB family.

The protein resides in the cell membrane. May be involved in the proteolytic processing of a quorum sensing system signal molecule precursor. In Lactiplantibacillus plantarum (strain ATCC BAA-793 / NCIMB 8826 / WCFS1) (Lactobacillus plantarum), this protein is Putative AgrB-like protein.